Consider the following 539-residue polypeptide: Phosphoenolpyruvate carboxykinase (ATP) (539 aa).

Substrate-binding residues include R64, Y206, and K212. ATP-binding positions include K212, H231, and 247–255 (GLSGTGKTT). Residues K212 and H231 each coordinate Mn(2+). D268 is a Mn(2+) binding site. Residues E296, R332, 448–449 (RI), and T454 contribute to the ATP site. R332 contacts substrate.

The protein belongs to the phosphoenolpyruvate carboxykinase (ATP) family. In terms of assembly, monomer. It depends on Mn(2+) as a cofactor.

The protein localises to the cytoplasm. It carries out the reaction oxaloacetate + ATP = phosphoenolpyruvate + ADP + CO2. The protein operates within carbohydrate biosynthesis; gluconeogenesis. Its function is as follows. Involved in the gluconeogenesis. Catalyzes the conversion of oxaloacetate (OAA) to phosphoenolpyruvate (PEP) through direct phosphoryl transfer between the nucleoside triphosphate and OAA. In Salmonella arizonae (strain ATCC BAA-731 / CDC346-86 / RSK2980), this protein is Phosphoenolpyruvate carboxykinase (ATP).